The sequence spans 182 residues: uncharacterized protein (182 aa).

2 consecutive transmembrane segments (helical) span residues 58–78 and 81–101; these read ILFG…YVVY and PVSI…IIIW.

The protein to M.jannaschii MJ0803.

It localises to the cell membrane. This is an uncharacterized protein from Methanocaldococcus jannaschii (strain ATCC 43067 / DSM 2661 / JAL-1 / JCM 10045 / NBRC 100440) (Methanococcus jannaschii).